A 235-amino-acid chain; its full sequence is MFQFKQFSVKQDKTAMKVGTDGVLLGSWAPVFHNPFSILDIGAGTGIIALMLAQRTHAEQIDALEIDEDAYEQAVENFEASPWGDRLFCFHAGLDEFIEEPEDEYDLIVSNPPFYAEDYKTNDEQRDLARFQDAMPFEEIVEAADLLLSENGILAVIIPFKEEAKFTALAKDFELYPIKITRVKGTPKSEIKRSLLAFSRNEVSEIEIDELVIEIDRHIYTPEYIDLTKEFYLKM.

The protein belongs to the methyltransferase superfamily. tRNA (adenine-N(6)-)-methyltransferase family.

Its subcellular location is the cytoplasm. It catalyses the reaction adenosine(37) in tRNA1(Val) + S-adenosyl-L-methionine = N(6)-methyladenosine(37) in tRNA1(Val) + S-adenosyl-L-homocysteine + H(+). Specifically methylates the adenine in position 37 of tRNA(1)(Val) (anticodon cmo5UAC). In Flavobacterium johnsoniae (strain ATCC 17061 / DSM 2064 / JCM 8514 / BCRC 14874 / CCUG 350202 / NBRC 14942 / NCIMB 11054 / UW101) (Cytophaga johnsonae), this protein is tRNA1(Val) (adenine(37)-N6)-methyltransferase.